The primary structure comprises 310 residues: p-hydroxybenzoic acid efflux pump subunit AaeA (310 aa).

Residues 12–32 traverse the membrane as a helical segment; sequence AITLVLVILAFIAIFRAWVYY.

Belongs to the membrane fusion protein (MFP) (TC 8.A.1) family.

Its subcellular location is the cell inner membrane. Functionally, forms an efflux pump with AaeB. The protein is p-hydroxybenzoic acid efflux pump subunit AaeA of Salmonella schwarzengrund (strain CVM19633).